A 106-amino-acid polypeptide reads, in one-letter code: Large ribosomal subunit protein uL24 (106 aa).

The protein belongs to the universal ribosomal protein uL24 family. Part of the 50S ribosomal subunit.

Its function is as follows. One of two assembly initiator proteins, it binds directly to the 5'-end of the 23S rRNA, where it nucleates assembly of the 50S subunit. One of the proteins that surrounds the polypeptide exit tunnel on the outside of the subunit. The protein is Large ribosomal subunit protein uL24 of Clostridium tetani (strain Massachusetts / E88).